The primary structure comprises 156 residues: Transthyretin-like protein 1 (156 aa).

The N-terminal stretch at 1–17 is a signal peptide; it reads MKIALSFLFLTSTFSNA. N-linked (GlcNAc...) asparagine glycosylation occurs at N151.

This sequence belongs to the nematode transthyretin-like family.

Its subcellular location is the secreted. This Caenorhabditis elegans protein is Transthyretin-like protein 1 (ttr-1).